Here is a 196-residue protein sequence, read N- to C-terminus: Large ribosomal subunit protein uL10 (196 aa).

The segment at 167–196 (EKKAAEGPAEAPQPATEPPAEAPEAPADAE) is disordered.

The protein belongs to the universal ribosomal protein uL10 family. As to quaternary structure, part of the ribosomal stalk of the 50S ribosomal subunit. The N-terminus interacts with L11 and the large rRNA to form the base of the stalk. The C-terminus forms an elongated spine to which L12 dimers bind in a sequential fashion forming a multimeric L10(L12)X complex.

Functionally, forms part of the ribosomal stalk, playing a central role in the interaction of the ribosome with GTP-bound translation factors. The protein is Large ribosomal subunit protein uL10 of Mycolicibacterium paratuberculosis (strain ATCC BAA-968 / K-10) (Mycobacterium paratuberculosis).